We begin with the raw amino-acid sequence, 810 residues long: RING finger protein unkempt homolog (810 aa).

The interval 1 to 24 is disordered; sequence MSKGPGPGGSAASSAPPAATAQVL. Low complexity predominate over residues 10 to 19; sequence SAASSAPPAA. 5 C3H1-type zinc fingers span residues 84–113, 124–154, 215–241, 251–285, and 293–321; these read YSPD…HRTT, YYKT…HGPH, NYKT…HNSK, KYRS…HTRT, and IYKS…HVEQ. The segment at 239 to 265 is disordered; that stretch reads NSKDRRRSPRKHKYRSSPCPNVKHGDE. The residue at position 240 (serine 240) is a Phosphoserine. Positions 241–253 are enriched in basic residues; the sequence is KDRRRSPRKHKYR. A disordered region spans residues 324 to 343; sequence LSDDLQPSSAVSSPTQPGPV. Over residues 328-338 the composition is skewed to polar residues; sequence LQPSSAVSSPT. A phosphoserine mark is found at serine 374, serine 378, serine 385, and serine 631. Residues 643 to 723 adopt a coiled-coil conformation; sequence GAAELARLRQ…QEELERLHAG (81 aa). The segment at 766–801 adopts an RING-type; degenerate zinc-finger fold; sequence SVKCLKCQEQKRAVLPCQHAALCELCAEGSECPICQ.

The protein belongs to the unkempt family.

The protein resides in the cytoplasm. Its function is as follows. Sequence-specific RNA-binding protein which plays an important role in the establishment and maintenance of the early morphology of cortical neurons during embryonic development. Acts as a translation repressor and controls a translationally regulated cell morphology program to ensure proper structuring of the nervous system. Translational control depends on recognition of its binding element within target mRNAs which consists of a mandatory UAG trimer upstream of a U/A-rich motif. Associated with polysomes. This chain is RING finger protein unkempt homolog (UNK), found in Homo sapiens (Human).